Consider the following 414-residue polypeptide: DNA primase small subunit PriS (414 aa).

Active-site residues include Asp98, Asp100, and Asp312.

Belongs to the eukaryotic-type primase small subunit family. Heterodimer of a small subunit (PriS) and a large subunit (PriL). Mg(2+) is required as a cofactor. It depends on Mn(2+) as a cofactor.

Functionally, catalytic subunit of DNA primase, an RNA polymerase that catalyzes the synthesis of short RNA molecules used as primers for DNA polymerase during DNA replication. The small subunit contains the primase catalytic core and has DNA synthesis activity on its own. Binding to the large subunit stabilizes and modulates the activity, increasing the rate of DNA synthesis while decreasing the length of the DNA fragments, and conferring RNA synthesis capability. The DNA polymerase activity may enable DNA primase to also catalyze primer extension after primer synthesis. May also play a role in DNA repair. The polypeptide is DNA primase small subunit PriS (Methanosarcina acetivorans (strain ATCC 35395 / DSM 2834 / JCM 12185 / C2A)).